Here is a 721-residue protein sequence, read N- to C-terminus: BBSome complex member BBS2 (721 aa).

Residues 325-369 (RGNLMDTSAEQDLIRELSQKKQNLLLELRNYEENAKAELASPLNE) are a coiled coil.

In terms of assembly, part of BBSome complex, that contains BBS1, BBS2, BBS4, BBS5, BBS7, BBS8/TTC8, BBS9 and BBIP10. Interacts (via C-terminus) with BBS7. Interacts (via coiled coil domain) with MKKS. Interacts with CCDC28B and ALDOB. Interacts with DLEC1. Widely expressed.

It localises to the cell projection. Its subcellular location is the cilium membrane. It is found in the cytoplasm. The protein resides in the cytoskeleton. The protein localises to the microtubule organizing center. It localises to the centrosome. Its subcellular location is the centriolar satellite. Its function is as follows. The BBSome complex is thought to function as a coat complex required for sorting of specific membrane proteins to the primary cilia. The BBSome complex is required for ciliogenesis but is dispensable for centriolar satellite function. This ciliogenic function is mediated in part by the Rab8 GDP/GTP exchange factor, which localizes to the basal body and contacts the BBSome. Rab8(GTP) enters the primary cilium and promotes extension of the ciliary membrane. Firstly the BBSome associates with the ciliary membrane and binds to RAB3IP/Rabin8, the guanosyl exchange factor (GEF) for Rab8 and then the Rab8-GTP localizes to the cilium and promotes docking and fusion of carrier vesicles to the base of the ciliary membrane. The BBSome complex, together with the LTZL1, controls SMO ciliary trafficking and contributes to the sonic hedgehog (SHH) pathway regulation. Required for proper BBSome complex assembly and its ciliary localization. This Homo sapiens (Human) protein is BBSome complex member BBS2.